A 140-amino-acid chain; its full sequence is Translation initiation factor 2 subunit beta (140 aa).

The protein belongs to the eIF-2-beta/eIF-5 family. Heterotrimer composed of an alpha, a beta and a gamma chain.

In terms of biological role, eIF-2 functions in the early steps of protein synthesis by forming a ternary complex with GTP and initiator tRNA. The protein is Translation initiation factor 2 subunit beta (eif2b) of Pyrococcus abyssi (strain GE5 / Orsay).